A 418-amino-acid polypeptide reads, in one-letter code: MTDNKNLGGSTLLPAYFGEFGGQFVAESLLPALDQLEKAFVDATNHPEFRQELAAYLRDYLGRPTPLTECSNLPLPGQGRGYARIFLKREDLVHGGAHKTNQVIGQALLAKRMGKTRIIAETGAGQHGTATALACSLLGLECVVYMGAKDVARQQPNVYRMQLHGAKVIPVESGSGTLKDAVNEALRDWTATFHESHYLLGTAAGPHPFPTIVREFHKVISEEAKAQMLERTGKMPDVVVACVGGGSNAIGMFADFIDEEGVELVGAEPAGEGLDSGKHGATITNGQIGILHGTRSFLMRSSDGQVEESYSISAGLDYPGVGPQHAHLHSTGRATYVGITDAEALIAFQYLARYEGIIAALESSHALAYALKRAKLAEEEGKQITILVSLSGRGDKDVDHIRRTLEEKPELILKEEER.

Residue Lys-99 is modified to N6-(pyridoxal phosphate)lysine.

Belongs to the TrpB family. In terms of assembly, tetramer of two alpha and two beta chains. The cofactor is pyridoxal 5'-phosphate.

The enzyme catalyses (1S,2R)-1-C-(indol-3-yl)glycerol 3-phosphate + L-serine = D-glyceraldehyde 3-phosphate + L-tryptophan + H2O. Its pathway is amino-acid biosynthesis; L-tryptophan biosynthesis; L-tryptophan from chorismate: step 5/5. In terms of biological role, the beta subunit is responsible for the synthesis of L-tryptophan from indole and L-serine. This is Tryptophan synthase beta chain 1 (trpB1) from Corynebacterium efficiens (strain DSM 44549 / YS-314 / AJ 12310 / JCM 11189 / NBRC 100395).